A 612-amino-acid chain; its full sequence is UvrABC system protein C (612 aa).

One can recognise a GIY-YIG domain in the interval 20 to 98; it reads THSGVYRMLD…IKQHRPKYNI (79 aa). A UVR domain is found at 208–243; it reads STVLEEISAKMYQASEDMEYEKAQVYRDQLVVLRKL.

Belongs to the UvrC family. In terms of assembly, interacts with UvrB in an incision complex.

It localises to the cytoplasm. The UvrABC repair system catalyzes the recognition and processing of DNA lesions. UvrC both incises the 5' and 3' sides of the lesion. The N-terminal half is responsible for the 3' incision and the C-terminal half is responsible for the 5' incision. This Francisella tularensis subsp. novicida (strain U112) protein is UvrABC system protein C.